The sequence spans 92 residues: Muscle LIM protein 1 (92 aa).

In terms of domain architecture, LIM zinc-binding spans 11 to 62 (CPACGKSVYAAEERVAGGYKFHKTCFKCSMCNKALDSTNCTEHEKELFCKNC). The Nuclear localization signal signature appears at 65 to 70 (RKYGPK).

In the embryo, expression is restricted to the somatic, visceral, and pharyngeal muscles. Within the somatic musculature, MLP60 is distributed throughout the muscle fibers. There is no expression in cardiac mesoderm or in fat body.

The protein resides in the cytoplasm. The protein localises to the nucleus. In terms of biological role, positive regulator of myogenesis. In Drosophila melanogaster (Fruit fly), this protein is Muscle LIM protein 1 (Mlp60A).